The following is a 375-amino-acid chain: Methylthioribose-1-phosphate isomerase (375 aa).

Residues 53–55 (RGA), arginine 90, and glutamine 202 each bind substrate. The active-site Proton donor is the aspartate 243. 253–254 (NK) contributes to the substrate binding site.

This sequence belongs to the eIF-2B alpha/beta/delta subunits family. MtnA subfamily.

It carries out the reaction 5-(methylsulfanyl)-alpha-D-ribose 1-phosphate = 5-(methylsulfanyl)-D-ribulose 1-phosphate. The protein operates within amino-acid biosynthesis; L-methionine biosynthesis via salvage pathway; L-methionine from S-methyl-5-thio-alpha-D-ribose 1-phosphate: step 1/6. Functionally, catalyzes the interconversion of methylthioribose-1-phosphate (MTR-1-P) into methylthioribulose-1-phosphate (MTRu-1-P). This Rhodospirillum centenum (strain ATCC 51521 / SW) protein is Methylthioribose-1-phosphate isomerase.